Reading from the N-terminus, the 294-residue chain is 4-diphosphocytidyl-2-C-methyl-D-erythritol kinase (294 aa).

K11 is a catalytic residue. P93 to S103 serves as a coordination point for ATP. Residue D135 is part of the active site.

The protein belongs to the GHMP kinase family. IspE subfamily.

It carries out the reaction 4-CDP-2-C-methyl-D-erythritol + ATP = 4-CDP-2-C-methyl-D-erythritol 2-phosphate + ADP + H(+). It participates in isoprenoid biosynthesis; isopentenyl diphosphate biosynthesis via DXP pathway; isopentenyl diphosphate from 1-deoxy-D-xylulose 5-phosphate: step 3/6. Its function is as follows. Catalyzes the phosphorylation of the position 2 hydroxy group of 4-diphosphocytidyl-2C-methyl-D-erythritol. The polypeptide is 4-diphosphocytidyl-2-C-methyl-D-erythritol kinase (Chlorobium phaeobacteroides (strain DSM 266 / SMG 266 / 2430)).